The following is a 777-amino-acid chain: 1,4-alpha-glucan branching enzyme GlgB (777 aa).

Aspartate 408 functions as the Nucleophile in the catalytic mechanism. Catalysis depends on glutamate 461, which acts as the Proton donor.

Belongs to the glycosyl hydrolase 13 family. GlgB subfamily. Monomer.

It carries out the reaction Transfers a segment of a (1-&gt;4)-alpha-D-glucan chain to a primary hydroxy group in a similar glucan chain.. Its pathway is glycan biosynthesis; glycogen biosynthesis. Functionally, catalyzes the formation of the alpha-1,6-glucosidic linkages in glycogen by scission of a 1,4-alpha-linked oligosaccharide from growing alpha-1,4-glucan chains and the subsequent attachment of the oligosaccharide to the alpha-1,6 position. In Actinobacillus pleuropneumoniae serotype 7 (strain AP76), this protein is 1,4-alpha-glucan branching enzyme GlgB.